Consider the following 79-residue polypeptide: MKLTCVLIISVLFLTASQLITAVYSRDKQQYRAARLRDEMRNLKGARDCGEQGQGCYTRPCCPGLGCRAGATGGGVCQQ.

An N-terminal signal peptide occupies residues 1-22 (MKLTCVLIISVLFLTASQLITA). The propeptide occupies 23–47 (VYSRDKQQYRAARLRDEMRNLKGAR). 3 cysteine pairs are disulfide-bonded: Cys49–Cys62, Cys56–Cys67, and Cys61–Cys77. Pro60 and Pro63 each carry 4-hydroxyproline.

This sequence belongs to the conotoxin O1 superfamily. In terms of tissue distribution, expressed by the venom duct.

Its subcellular location is the secreted. Ion channel inhibitor that inhibits the increase in intracellular calcium upon depolarization in DRG neurons. In vivo, both intraperitoneal and intracranial injections into mice induce hyperactivity. The chain is Conotoxin Tr6.3 from Conus terebra (Sea snail).